We begin with the raw amino-acid sequence, 304 residues long: Quinolinate synthase 1 (304 aa).

Residues His-24 and Ser-41 each coordinate iminosuccinate. Cys-86 is a [4Fe-4S] cluster binding site. Residues 112 to 114 and Ser-129 each bind iminosuccinate; that span reads YVN. Cys-171 contributes to the [4Fe-4S] cluster binding site. Residues 197–199 and Thr-214 each bind iminosuccinate; that span reads HPE. Position 259 (Cys-259) interacts with [4Fe-4S] cluster.

It belongs to the quinolinate synthase family. Type 2 subfamily. [4Fe-4S] cluster serves as cofactor.

Its subcellular location is the cytoplasm. The catalysed reaction is iminosuccinate + dihydroxyacetone phosphate = quinolinate + phosphate + 2 H2O + H(+). Its pathway is cofactor biosynthesis; NAD(+) biosynthesis; quinolinate from iminoaspartate: step 1/1. Functionally, catalyzes the condensation of iminoaspartate with dihydroxyacetone phosphate to form quinolinate. This Methanosarcina acetivorans (strain ATCC 35395 / DSM 2834 / JCM 12185 / C2A) protein is Quinolinate synthase 1.